The following is a 321-amino-acid chain: Sideroflexin-3 (321 aa).

M1 is subject to N-acetylmethionine. 4 helical membrane passes run L146–L164, L174–L194, I225–V245, and L266–F286.

This sequence belongs to the sideroflexin family.

Its subcellular location is the mitochondrion membrane. The enzyme catalyses L-serine(in) = L-serine(out). Its function is as follows. Mitochondrial serine transporter that mediates transport of serine into mitochondria, an important step of the one-carbon metabolism pathway. Mitochondrial serine is converted to glycine and formate, which then exits to the cytosol where it is used to generate the charged folates that serve as one-carbon donors. The chain is Sideroflexin-3 (Sfxn3) from Rattus norvegicus (Rat).